The sequence spans 228 residues: PKHD-type hydroxylase YbiX (228 aa).

A Fe2OG dioxygenase domain is found at Thr-78–Ser-177. The Fe cation site is built by His-96, Asp-98, and His-158. Residue Arg-168 coordinates 2-oxoglutarate.

Requires Fe(2+) as cofactor. L-ascorbate is required as a cofactor.

The sequence is that of PKHD-type hydroxylase YbiX from Escherichia coli O157:H7.